We begin with the raw amino-acid sequence, 124 residues long: Non-structural protein 2 (124 aa).

The DLNP; interaction with MAP1B motif lies at 121–124 (DLNP).

This sequence belongs to the pneumovirus non-structural protein 2 family. In terms of assembly, monomer (instable). Homomultimer. Heteromultimer with NS1. Interacts with host RIGI (via N-terminus); this interaction prevents host signaling pathway involved in interferon production. Interacts with host MAP1B/microtubule-associated protein 1B.

Its subcellular location is the host mitochondrion. In terms of biological role, plays a major role in antagonizing the type I IFN-mediated antiviral response. Acts cooperatively with NS1 to repress activation and nuclear translocation of host IFN-regulatory factor IRF3. Interacts with the host cytoplasmic sensor of viral nucleic acids RIGI and prevents the interaction with its downstream partner MAVS. Together with NS2, participates in the proteasomal degradation of host STAT2, IRF3, IRF7, TBK1 and RIGI through a NS-degradasome involving CUL2 and Elongin-C. The degradasome requires an intact mitochondrial MAVS. Induces host SOCS1 expression. Induces activation of NF-kappa-B. Suppresses premature apoptosis by an NF-kappa-B-dependent, interferon-independent mechanism promoting continued viral replication. This chain is Non-structural protein 2 (1B), found in Homo sapiens (Human).